The sequence spans 431 residues: Adenylosuccinate synthetase (431 aa).

GTP contacts are provided by residues 12 to 18 and 40 to 42; these read GDEGKGK and GHT. The active-site Proton acceptor is Asp-13. The Mg(2+) site is built by Asp-13 and Gly-40. Residues 13-16, 38-41, Thr-129, Arg-143, Gln-224, Thr-239, and Arg-303 contribute to the IMP site; these read DEGK and NAGH. Catalysis depends on His-41, which acts as the Proton donor. Residue 299-305 participates in substrate binding; that stretch reads VTTGRAR. GTP is bound by residues Arg-305, 331–333, and 413–415; these read KLD and GVG.

The protein belongs to the adenylosuccinate synthetase family. As to quaternary structure, homodimer. Requires Mg(2+) as cofactor.

It is found in the cytoplasm. It catalyses the reaction IMP + L-aspartate + GTP = N(6)-(1,2-dicarboxyethyl)-AMP + GDP + phosphate + 2 H(+). It functions in the pathway purine metabolism; AMP biosynthesis via de novo pathway; AMP from IMP: step 1/2. Functionally, plays an important role in the de novo pathway of purine nucleotide biosynthesis. Catalyzes the first committed step in the biosynthesis of AMP from IMP. This Mycobacterium sp. (strain KMS) protein is Adenylosuccinate synthetase.